The primary structure comprises 171 residues: UPF0398 protein M6_Spy1399 (171 aa).

The protein belongs to the UPF0398 family.

The polypeptide is UPF0398 protein M6_Spy1399 (Streptococcus pyogenes serotype M6 (strain ATCC BAA-946 / MGAS10394)).